Reading from the N-terminus, the 81-residue chain is Short neurotoxin 1 (81 aa).

The N-terminal stretch at 1–21 (MKTLLLTLVVVTIVFLDLGYT) is a signal peptide. 4 disulfides stabilise this stretch: Cys-24–Cys-43, Cys-38–Cys-60, Cys-62–Cys-73, and Cys-74–Cys-79.

Belongs to the three-finger toxin family. Short-chain subfamily. Type I alpha-neurotoxin sub-subfamily. In terms of tissue distribution, expressed by the venom gland.

It is found in the secreted. In terms of biological role, binds to muscle nicotinic acetylcholine receptor (nAChR) and inhibit acetylcholine from binding to the receptor, thereby impairing neuromuscular transmission. The protein is Short neurotoxin 1 of Notechis scutatus scutatus (Mainland tiger snake).